The sequence spans 137 residues: MLQPKRTKFRKMQKGRNRGLALDTNVNFGTFGLKAVDRGRLTARQIEAARRTITRAIKRQGKIWIRIFPDKPITEKPLEVRMGKGKGNVENWVALIKPGKILYEIDGVTEELAREALRLAAAKLPMKTTFANKMILS.

It belongs to the universal ribosomal protein uL16 family. As to quaternary structure, part of the 50S ribosomal subunit.

Binds 23S rRNA and is also seen to make contacts with the A and possibly P site tRNAs. This chain is Large ribosomal subunit protein uL16, found in Baumannia cicadellinicola subsp. Homalodisca coagulata.